An 807-amino-acid polypeptide reads, in one-letter code: Protein WEAK CHLOROPLAST MOVEMENT UNDER BLUE LIGHT 1 (807 aa).

The tract at residues 1 to 162 (MEDLKTVEAS…GTPKNVDSHR (162 aa)) is disordered. The span at 31–40 (RESNIQSATK) shows a compositional bias: polar residues. Positions 46 to 73 (QSQTDTEETQQSQTDTEETQQSQTDDTT) are enriched in low complexity. Polar residues predominate over residues 138–157 (RTVSSPRFSGSPVSTGTPKN). Position 148 is a phosphoserine (S148). Coiled-coil stretches lie at residues 191–429 (RMQA…ELVA), 457–489 (DLHA…LKLA), 516–621 (IAVA…ALEE), and 664–724 (AAVS…WRAE). Disordered stretches follow at residues 532 to 565 (IASV…EAKS) and 722 to 789 (RAEH…KKKK). 3 stretches are compositionally biased toward basic and acidic residues: residues 537-548 (SKEKDAREKMVE), 722-732 (RAEHEQKRKAG), and 739-749 (KNLKESFEGGK). Positions 761–781 (SSPSESYGTEENSETNLSPQT) are enriched in polar residues.

It belongs to the WEB family. In terms of assembly, interacts with PMI2. As to expression, ubiquitous but preferentially in chloroplast-containing tissues.

It localises to the cytoplasm. In terms of biological role, required for the chloroplast avoidance response under high intensity blue light. This avoidance response consists in the relocation of chloroplasts on the anticlinal side of exposed cells. Acts in association with PMI2 to maintain the velocity of chloroplast photorelocation movement via cp-actin filaments regulation. The chain is Protein WEAK CHLOROPLAST MOVEMENT UNDER BLUE LIGHT 1 (WEB1) from Arabidopsis thaliana (Mouse-ear cress).